The primary structure comprises 474 residues: Viral protein TPX (474 aa).

Positions 268–474 (VTVTPISSPS…TPTSTTSSNI (207 aa)) are disordered. Residues 275–365 (SPSPTPTPTP…PTPTPTPTPT (91 aa)) show a composition bias toward pro residues. A Thr-Pro(N) repeat occupies 278 to 367 (PTPTPTPTPT…PTPTPTPTPT (90 aa)). The tract at residues 278 to 467 (PTPTPTPTPT…PTPTPTPTPT (190 aa)) is 3 Thr-Pro repeats regions and two near identical repeats. Residues 368–377 (YDITYVVFDV) constitute a repeat. The Thr-Pro(N) repeat unit spans residues 378 to 436 (TPSPTPTPTPTPTPTPTPTPTPTPTPTPTPTPTPTPTPTPTPTPTPTPTPTPTPTPTPT). The segment covering 380–434 (SPTPTPTPTPTPTPTPTPTPTPTPTPTPTPTPTPTPTPTPTPTPTPTPTPTPTPT) has biased composition (pro residues). The segment at residues 437–446 (YDITYVIFDV) is a repeat. A Thr-Pro(N) repeat occupies 447–467 (TPSPTPTPTPTPTPTPTPTPT). Pro residues predominate over residues 449 to 465 (SPTPTPTPTPTPTPTPT).

The protein is Viral protein TPX of Thermoproteus tenax virus 1 (strain VT3) (TTV1).